The chain runs to 151 residues: Deoxyuridine 5'-triphosphate nucleotidohydrolase (151 aa).

Residues 70 to 72, N83, 87 to 89, and M97 each bind substrate; these read RSG and LID.

It belongs to the dUTPase family. Requires Mg(2+) as cofactor.

It catalyses the reaction dUTP + H2O = dUMP + diphosphate + H(+). Its pathway is pyrimidine metabolism; dUMP biosynthesis; dUMP from dCTP (dUTP route): step 2/2. This enzyme is involved in nucleotide metabolism: it produces dUMP, the immediate precursor of thymidine nucleotides and it decreases the intracellular concentration of dUTP so that uracil cannot be incorporated into DNA. This chain is Deoxyuridine 5'-triphosphate nucleotidohydrolase, found in Ectopseudomonas mendocina (strain ymp) (Pseudomonas mendocina).